Here is a 217-residue protein sequence, read N- to C-terminus: 2-phospho-L-lactate guanylyltransferase (217 aa).

Belongs to the CofC family. Homodimer.

It carries out the reaction (2S)-2-phospholactate + GTP + H(+) = (2S)-lactyl-2-diphospho-5'-guanosine + diphosphate. The protein operates within cofactor biosynthesis; coenzyme F420 biosynthesis. Its function is as follows. Guanylyltransferase that catalyzes the activation of (2S)-2-phospholactate (2-PL) as (2S)-lactyl-2-diphospho-5'-guanosine, via the condensation of 2-PL with GTP. It is involved in the biosynthesis of coenzyme F420, a hydride carrier cofactor. This Halorubrum lacusprofundi (strain ATCC 49239 / DSM 5036 / JCM 8891 / ACAM 34) protein is 2-phospho-L-lactate guanylyltransferase.